A 147-amino-acid polypeptide reads, in one-letter code: MQDALFFISNNLVLSLIWLFFLILIFFLSTKNMFLKSKIINNFHAINLINQKKAIIVDTRSVELYDSGHIINAINIPFNNICRKTIKKLSLSRSVPIILIIDSLEYNKYIKKFTKYGLDKVYFLKNGMNSWNSENLPTTFKKNIFLK.

Residues 50-140 form the Rhodanese domain; the sequence is NQKKAIIVDT…WNSENLPTTF (91 aa).

This is an uncharacterized protein from Buchnera aphidicola subsp. Schizaphis graminum (strain Sg).